A 95-amino-acid polypeptide reads, in one-letter code: Aspartyl/glutamyl-tRNA(Asn/Gln) amidotransferase subunit C (95 aa).

This sequence belongs to the GatC family. As to quaternary structure, heterotrimer of A, B and C subunits.

The catalysed reaction is L-glutamyl-tRNA(Gln) + L-glutamine + ATP + H2O = L-glutaminyl-tRNA(Gln) + L-glutamate + ADP + phosphate + H(+). The enzyme catalyses L-aspartyl-tRNA(Asn) + L-glutamine + ATP + H2O = L-asparaginyl-tRNA(Asn) + L-glutamate + ADP + phosphate + 2 H(+). In terms of biological role, allows the formation of correctly charged Asn-tRNA(Asn) or Gln-tRNA(Gln) through the transamidation of misacylated Asp-tRNA(Asn) or Glu-tRNA(Gln) in organisms which lack either or both of asparaginyl-tRNA or glutaminyl-tRNA synthetases. The reaction takes place in the presence of glutamine and ATP through an activated phospho-Asp-tRNA(Asn) or phospho-Glu-tRNA(Gln). The protein is Aspartyl/glutamyl-tRNA(Asn/Gln) amidotransferase subunit C of Phenylobacterium zucineum (strain HLK1).